The sequence spans 828 residues: Translation initiation factor IF-2 (828 aa).

2 disordered regions span residues 48–76 and 112–148; these read SYSGSTTTLSLNKEKGSLETGSSSGSEEF and ASQEDPIEVEQEESSDTNKVKEEPKIEEVKDIEESTL. The span at 49–58 shows a compositional bias: polar residues; that stretch reads YSGSTTTLSL. The segment covering 65–74 has biased composition (low complexity); it reads LETGSSSGSE. Over residues 116–126 the composition is skewed to acidic residues; it reads DPIEVEQEESS. A compositionally biased stretch (basic and acidic residues) spans 127-144; it reads DTNKVKEEPKIEEVKDIE. One can recognise a tr-type G domain in the interval 326–496; that stretch reads SRAPVVTVMG…LLIAEMQNLK (171 aa). Positions 335–342 are G1; that stretch reads GHVDHGKT. 335–342 is a GTP binding site; sequence GHVDHGKT. The segment at 360–364 is G2; that stretch reads GITQH. The tract at residues 382–385 is G3; that stretch reads DTPG. Residues 382 to 386 and 436 to 439 each bind GTP; these read DTPGH and NKID. The tract at residues 436–439 is G4; the sequence is NKID. Residues 472 to 474 are G5; the sequence is SAL.

Belongs to the TRAFAC class translation factor GTPase superfamily. Classic translation factor GTPase family. IF-2 subfamily.

The protein localises to the cytoplasm. Its function is as follows. One of the essential components for the initiation of protein synthesis. Protects formylmethionyl-tRNA from spontaneous hydrolysis and promotes its binding to the 30S ribosomal subunits. Also involved in the hydrolysis of GTP during the formation of the 70S ribosomal complex. The polypeptide is Translation initiation factor IF-2 (Rickettsia bellii (strain OSU 85-389)).